A 1976-amino-acid polypeptide reads, in one-letter code: Myosin-10 (1976 aa).

Residue Arg18 is modified to Omega-N-methylarginine. The 51-residue stretch at 31 to 81 folds into the Myosin N-terminal SH3-like domain; it reads TAKKLVWIPSERHGFEAASIKEERGDEVLVELAENGKKAMVNKDDIQKMNP. The Myosin motor domain maps to 85–783; it reads SKVEDMAELT…VLAHLEEERD (699 aa). 178–185 is a binding site for ATP; that stretch reads GESGAGKT. Lys442 is modified (N6-acetyllysine). The tract at residues 661 to 683 is actin-binding; it reads LTKLMATLRNTNPNFVRCIIPNH. An IQ domain is found at 786-815; sequence ITDIIIFFQAVCRGYLARKAFAKKQQQLSA. Positions 845-1976 form a coiled coil; the sequence is LQVTRQEEEL…INETQPPQSE (1132 aa). A disordered region spans residues 1126–1149; sequence DFESEKASRNKAEKQKRDLSEELE. The span at 1129–1149 shows a compositional bias: basic and acidic residues; the sequence is SEKASRNKAEKQKRDLSEELE. Residue Ser1145 is modified to Phosphoserine. 3 positions are modified to N6-acetyllysine: Lys1241, Lys1301, and Lys1645. Disordered stretches follow at residues 1697–1718 and 1874–1976; these read ASSERARRHAEQERDELADEIA and KANA…PQSE. Positions 1698-1708 are enriched in basic and acidic residues; sequence SSERARRHAEQ. Omega-N-methylarginine is present on Arg1930. Phosphoserine occurs at positions 1935, 1937, 1938, and 1939. An Omega-N-methylarginine modification is found at Arg1940. 2 positions are modified to phosphoserine: Ser1952 and Ser1956. Thr1960 carries the phosphothreonine modification. A compositionally biased stretch (polar residues) spans 1967–1976; the sequence is INETQPPQSE. A Phosphoserine modification is found at Ser1975.

Belongs to the TRAFAC class myosin-kinesin ATPase superfamily. Myosin family. In terms of assembly, myosin is a hexameric protein that consists of 2 heavy chain subunits (MHC), 2 alkali light chain subunits (MLC) and 2 regulatory light chain subunits (MLC-2). Interacts with PLEKHG6. Interacts with ECPAS. Interacts with KIF26B. Interacts with LARP6. Interacts with MCC. Interacts with CFAP95. In terms of processing, phosphorylated by ABL2.

The protein localises to the cell projection. It is found in the lamellipodium. In terms of biological role, cellular myosin that appears to play a role in cytokinesis, cell shape, and specialized functions such as secretion and capping. Involved with LARP6 in the stabilization of type I collagen mRNAs for CO1A1 and CO1A2. During cell spreading, plays an important role in cytoskeleton reorganization, focal contacts formation (in the central part but not the margins of spreading cells), and lamellipodial extension; this function is mechanically antagonized by MYH9. The protein is Myosin-10 (MYH10) of Bos taurus (Bovine).